The chain runs to 346 residues: Cyclin-dependent kinase 7 (346 aa).

Alanine 2 carries the post-translational modification N-acetylalanine. Phosphoserine is present on serine 7. Residues 12–295 form the Protein kinase domain; it reads YEKLDFLGEG…ATQALKMKYF (284 aa). ATP-binding positions include 18–26 and lysine 41; that span reads LGEGQFATV. Aspartate 137 (proton acceptor) is an active-site residue. Phosphoserine; by CDK1 and CDK2 is present on serine 164. A Phosphothreonine; by CDK2 modification is found at threonine 170. At serine 321 the chain carries Phosphoserine.

This sequence belongs to the protein kinase superfamily. CMGC Ser/Thr protein kinase family. CDC2/CDKX subfamily. In terms of assembly, associates primarily with cyclin-H (CCNH) and MAT1 to form the CAK complex. CAK can further associate with the core-TFIIH to form the TFIIH basal transcription factor; this complex is sensitive to UV light. The CAK complex binds to p53/TP53 in response to DNA damage. Interacts with CDK2, SF1/NR5A1, PUF60 and PRKCI. Interacts with HINT1. Phosphorylation of Ser-164 during mitosis inactivates the enzyme. Phosphorylation of Thr-170 is required for activity. Phosphorylated at Ser-164 and Thr-170 by CDK2. In terms of tissue distribution, ubiquitous.

Its subcellular location is the nucleus. The protein localises to the cytoplasm. The protein resides in the perinuclear region. It carries out the reaction L-seryl-[protein] + ATP = O-phospho-L-seryl-[protein] + ADP + H(+). The enzyme catalyses L-threonyl-[protein] + ATP = O-phospho-L-threonyl-[protein] + ADP + H(+). The catalysed reaction is [DNA-directed RNA polymerase] + ATP = phospho-[DNA-directed RNA polymerase] + ADP + H(+). With respect to regulation, inactivated by phosphorylation. Repressed by roscovitine (seliciclib, CYC202), R547 (Ro-4584820) and SNS-032 (BMS-387032). The association of p53/TP53 to the CAK complex in response to DNA damage reduces kinase activity toward CDK2 and RNA polymerase II repetitive C-terminal domain (CTD), thus stopping cell cycle progression. The inactivation by roscovitine promotes caspase-mediated apoptosis in leukemic cells. Specifically inactivated by THZ1. Functionally, serine/threonine kinase involved in cell cycle control and in RNA polymerase II-mediated RNA transcription. Cyclin-dependent kinases (CDKs) are activated by the binding to a cyclin and mediate the progression through the cell cycle. Each different complex controls a specific transition between 2 subsequent phases in the cell cycle. Required for both activation and complex formation of CDK1/cyclin-B during G2-M transition, and for activation of CDK2/cyclins during G1-S transition (but not complex formation). CDK7 is the catalytic subunit of the CDK-activating kinase (CAK) complex. Phosphorylates SPT5/SUPT5H, SF1/NR5A1, POLR2A, p53/TP53, CDK1, CDK2, CDK4, CDK6 and CDK11B/CDK11. Initiates transcription by RNA polymerase II by mediating phosphorylation of POLR2A at 'Ser-5' of the repetitive C-terminal domain (CTD) when POLR2A is in complex with DNA, promoting dissociation from DNA and initiation. CAK activates the cyclin-associated kinases CDK1, CDK2, CDK4 and CDK6 by threonine phosphorylation, thus regulating cell cycle progression. CAK complexed to the core-TFIIH basal transcription factor activates RNA polymerase II by serine phosphorylation of the CTD of POLR2A, allowing its escape from the promoter and elongation of the transcripts. Its expression and activity are constant throughout the cell cycle. Upon DNA damage, triggers p53/TP53 activation by phosphorylation, but is inactivated in turn by p53/TP53; this feedback loop may lead to an arrest of the cell cycle and of the transcription, helping in cell recovery, or to apoptosis. Required for DNA-bound peptides-mediated transcription and cellular growth inhibition. This is Cyclin-dependent kinase 7 (CDK7) from Homo sapiens (Human).